Consider the following 307-residue polypeptide: Malate dehydrogenase (307 aa).

NAD(+) contacts are provided by residues 8–13 and Asp-32; that span reads GAGNVG. Substrate contacts are provided by Arg-81 and Arg-87. NAD(+)-binding positions include Asn-94 and 117-119; that span reads VSN. Residues Asn-119 and Arg-150 each coordinate substrate. His-174 functions as the Proton acceptor in the catalytic mechanism.

Belongs to the LDH/MDH superfamily. MDH type 3 family.

The catalysed reaction is (S)-malate + NAD(+) = oxaloacetate + NADH + H(+). Its function is as follows. Catalyzes the reversible oxidation of malate to oxaloacetate. In Dehalococcoides mccartyi (strain CBDB1), this protein is Malate dehydrogenase.